The following is a 467-amino-acid chain: UBX domain-containing protein 7 (467 aa).

The residue at position 2 (A2) is an N-acetylalanine. Residues 2–54 enclose the UBA domain; that stretch reads AAHGGSAASSALKGLIQQFTAITGASESVGKHMLEACNNNLEMAVTMFLDGGG. A disordered region spans residues 57–77; it reads EEPSTSSASVSTVRPHTEEEV. The segment covering 59 to 70 has biased composition (polar residues); that stretch reads PSTSSASVSTVR. Residues K84 and K112 each participate in a glycyl lysine isopeptide (Lys-Gly) (interchain with G-Cter in SUMO2) cross-link. Residues 240-260 form a disordered region; sequence GQLDGLSSSPPKKCARSESLI. 4 positions are modified to phosphoserine: S256, S258, S263, and S266. One copy of the ubiquitin-interacting motif (UIM) repeat lies at 263–282; sequence SEDSQLEAAIRASLQETHFD. Residues 281 to 364 form a disordered region; it reads FDSAQAKQDS…TATNHQGLPS (84 aa). Positions 330 to 344 are enriched in basic and acidic residues; the sequence is HKDLGHRKEENRRPL. S373 bears the Phosphoserine mark. Residues 386 to 463 enclose the UBX domain; that stretch reads VNGPKAQLML…GLCPQETVFV (78 aa).

As to quaternary structure, interacts with neddylated CUL2, ubiquitinated HIF1A, and VCP/p97.

It localises to the nucleus. Its function is as follows. Ubiquitin-binding adapter that links a subset of NEDD8-associated cullin ring ligases (CRLs) to the segregase VCP/p97, to regulate turnover of their ubiquitination substrates. The polypeptide is UBX domain-containing protein 7 (Ubxn7) (Mus musculus (Mouse)).